The chain runs to 464 residues: Cysteine--tRNA ligase (464 aa).

Cysteine 28 lines the Zn(2+) pocket. Residues 30-40 carry the 'HIGH' region motif; that stretch reads PTVYDTAHIGN. Residues cysteine 212, histidine 237, and glutamate 241 each coordinate Zn(2+). A 'KMSKS' region motif is present at residues 270–274; that stretch reads KMSKS. Residue lysine 273 participates in ATP binding.

Belongs to the class-I aminoacyl-tRNA synthetase family. As to quaternary structure, monomer. It depends on Zn(2+) as a cofactor.

The protein resides in the cytoplasm. The enzyme catalyses tRNA(Cys) + L-cysteine + ATP = L-cysteinyl-tRNA(Cys) + AMP + diphosphate. The sequence is that of Cysteine--tRNA ligase from Wolbachia pipientis subsp. Culex pipiens (strain wPip).